A 503-amino-acid chain; its full sequence is Glycerol kinase (503 aa).

Position 14 (Thr-14) interacts with ADP. ATP-binding residues include Thr-14, Thr-15, and Ser-16. Thr-14 lines the sn-glycerol 3-phosphate pocket. ADP is bound at residue Arg-18. Sn-glycerol 3-phosphate contacts are provided by Arg-84, Glu-85, Tyr-136, and Asp-246. Glycerol-binding residues include Arg-84, Glu-85, Tyr-136, Asp-246, and Gln-247. Residues Thr-268 and Gly-311 each contribute to the ADP site. ATP is bound by residues Thr-268, Gly-311, Gln-315, and Gly-412. Positions 412 and 416 each coordinate ADP.

The protein belongs to the FGGY kinase family. Homotetramer and homodimer (in equilibrium). Heterodimer with EIIA-Glc. Binds 1 zinc ion per glycerol kinase EIIA-Glc dimer. The zinc ion is important for dimerization.

It catalyses the reaction glycerol + ATP = sn-glycerol 3-phosphate + ADP + H(+). The protein operates within polyol metabolism; glycerol degradation via glycerol kinase pathway; sn-glycerol 3-phosphate from glycerol: step 1/1. With respect to regulation, activity of this regulatory enzyme is affected by several metabolites. Allosterically and non-competitively inhibited by fructose 1,6-bisphosphate (FBP) and unphosphorylated phosphocarrier protein EIIA-Glc (III-Glc), an integral component of the bacterial phosphotransferase (PTS) system. Functionally, key enzyme in the regulation of glycerol uptake and metabolism. Catalyzes the phosphorylation of glycerol to yield sn-glycerol 3-phosphate. The protein is Glycerol kinase of Klebsiella pneumoniae subsp. pneumoniae (strain ATCC 700721 / MGH 78578).